A 149-amino-acid chain; its full sequence is SsrA-binding protein (149 aa).

Belongs to the SmpB family.

It is found in the cytoplasm. In terms of biological role, required for rescue of stalled ribosomes mediated by trans-translation. Binds to transfer-messenger RNA (tmRNA), required for stable association of tmRNA with ribosomes. tmRNA and SmpB together mimic tRNA shape, replacing the anticodon stem-loop with SmpB. tmRNA is encoded by the ssrA gene; the 2 termini fold to resemble tRNA(Ala) and it encodes a 'tag peptide', a short internal open reading frame. During trans-translation Ala-aminoacylated tmRNA acts like a tRNA, entering the A-site of stalled ribosomes, displacing the stalled mRNA. The ribosome then switches to translate the ORF on the tmRNA; the nascent peptide is terminated with the 'tag peptide' encoded by the tmRNA and targeted for degradation. The ribosome is freed to recommence translation, which seems to be the essential function of trans-translation. The protein is SsrA-binding protein of Acholeplasma laidlawii (strain PG-8A).